The chain runs to 406 residues: CMP-sialic acid transporter 2 (406 aa).

Over 1-41 (MKNGMAECSVCRSRLVSPSSKAISRAYDNYNYKIRVSSKQR) the chain is Cytoplasmic. A helical membrane pass occupies residues 42–62 (ALNVFLVVGDCMLVGLQPVLV). Over 63-75 (YMSKVDGKFNFSP) the chain is Lumenal. A helical transmembrane segment spans residues 76–96 (ISVNFLTEIAKVIFAMVMLLF). The Cytoplasmic portion of the chain corresponds to 97 to 148 (QARHQKVGEKPLLSLSTFVQAARNNMLLAVPAGLYAINNYLKFTMQLYFNPA). The chain crosses the membrane as a helical span at residues 149 to 169 (TVKMLSNLKVLVIAVLLKMIM). The Lumenal portion of the chain corresponds to 170-172 (KRR). The helical transmembrane segment at 173-193 (FSIIQWEALALLLIGISINQL) threads the bilayer. At 194-201 (RSLPEGAT) the chain is on the cytoplasmic side. A helical transmembrane segment spans residues 202–222 (TVAVPIATGAYICTFIFVTVP). At 223–245 (SLASVYNEYALKSQYDTSIYLQN) the chain is on the lumenal side. The chain crosses the membrane as a helical span at residues 246 to 266 (LFLYGYGAIFNFLGILGTVIY). Residues 267-282 (KGPGSFDILQGHSRAT) lie on the Cytoplasmic side of the membrane. A helical membrane pass occupies residues 283–303 (MFLILNNAAQGILSSFFFKYA). Over 304–323 (DTILKKYSSTVATIFTGIAS) the chain is Lumenal. The chain crosses the membrane as a helical span at residues 324–344 (AALFGHILTMNFLLGISIVFI). Residues 345 to 406 (SMHQFFSPLS…SDDRVPLLPR (62 aa)) lie on the Cytoplasmic side of the membrane.

This sequence belongs to the nucleotide-sugar transporter family. CMP-Sialate:CMP antiporter (TC 2.A.7.12) subfamily.

The protein resides in the golgi apparatus membrane. In terms of biological role, sugar transporter involved in the transport of CMP-sialic acid from the cytoplasm into the Golgi. The sequence is that of CMP-sialic acid transporter 2 from Arabidopsis thaliana (Mouse-ear cress).